The chain runs to 627 residues: MAFVSIAPLASRCCVHKSFVSSREVKPLCRTIPTLGRCRRGKTVTPSISMCWTATVLDDGVQRRIANHHSNLWDDSFIQSLSTPYGETSYLERADKLIGEVKEIINSISVEDGELITPLNDLIQRLSIVDIIERLGIDRHFKNEIKSALDYVYSYWNEKGIGCGRECVITHLNSTALGLRTLRLHGYPVSSDVLEQFKDQNGQFACSAIQTEGEIKSVLNLFRASLIAFPGEKVMEEAEIFSTIYLKEALLTIPVCSLSREIAYVLEHGWHTNLPRLEARNYIDVFGQDPIYGTPNIKMTQKLLEIAKLEFNIFHSLQQKELKHLSRWWKDSVFSQLAFPRHRHVEYYTLASCIDIDPQHSSFRLGFAKISHLGTVLDDIYDTFGTMDELELFTAAVKRWHPSATKWLPEYMKGVYMMLYETVNEMAREADKSQGRDTLNYARQAWEAYIDSYMKEAKWISSGFLPTFEEYLDNGKVSFGYRIGTLQPILTLGTPFPHHILQEIDFPSSLNDLACSILRLKGDILTYQAERSRGEKSSCISCYMKDNPGSTEEDAVAYINGMVNKSLKELNWEFLRPDSNAPITSKKHAFDILRAFYHLYKHRDGFSVARNEIRNLVKTTVIEPVPL.

Residues 1–21 (MAFVSIAPLASRCCVHKSFVS) constitute a chloroplast transit peptide. Residues Asp378, Asp382, and Glu530 each contribute to the Mg(2+) site. Residues 378-382 (DDIYD) carry the DDXXD motif motif.

The protein belongs to the terpene synthase family. Tpsd subfamily. The cofactor is Mg(2+). Mn(2+) is required as a cofactor.

The protein localises to the plastid. It is found in the chloroplast. The enzyme catalyses (2E)-geranyl diphosphate + H2O = (R)-linalool + diphosphate. It participates in terpene metabolism; oleoresin biosynthesis. Functionally, terpene synthase (TPS) involved in the biosynthesis of monoterpene natural products included in conifer oleoresin secretions and volatile emissions; these compounds contribute to biotic and abiotic stress defense against herbivores and pathogens. Catalyzes the conversion of (2E)-geranyl diphosphate (GPP) to (R)-linalool. The sequence is that of (R)-linalool synthase, chloroplastic from Picea glauca (White spruce).